The primary structure comprises 483 residues: UDP-N-acetylmuramyl-tripeptide synthetase (483 aa).

Ser43 contributes to the UDP-N-acetyl-alpha-D-muramoyl-L-alanyl-D-glutamate binding site. 116-122 (GTKGKTT) provides a ligand contact to ATP. Residues 160-161 (TT), Ser187, and Arg195 each bind UDP-N-acetyl-alpha-D-muramoyl-L-alanyl-D-glutamate. The residue at position 229 (Lys229) is an N6-carboxylysine.

It belongs to the MurCDEF family. MurE subfamily. In terms of processing, carboxylation is probably crucial for Mg(2+) binding and, consequently, for the gamma-phosphate positioning of ATP.

The protein localises to the cytoplasm. The protein operates within cell wall biogenesis; peptidoglycan biosynthesis. Catalyzes the addition of an amino acid to the nucleotide precursor UDP-N-acetylmuramoyl-L-alanyl-D-glutamate (UMAG) in the biosynthesis of bacterial cell-wall peptidoglycan. The sequence is that of UDP-N-acetylmuramyl-tripeptide synthetase from Lactococcus lactis subsp. cremoris (strain MG1363).